Here is a 226-residue protein sequence, read N- to C-terminus: Putative pyridoxamine 5'-phosphate oxidase (226 aa).

Residue 16 to 19 (LNSH) coordinates pyridoxal 5'-phosphate. Residue 72–75 (RMVL) participates in FMN binding. Lysine 77 is a binding site for pyridoxal 5'-phosphate. FMN contacts are provided by residues 87–88 (YT), 93–94 (RK), and glutamine 116. Pyridoxal 5'-phosphate contacts are provided by tyrosine 134, arginine 138, and serine 142. Residues 151–152 (QS) and tryptophan 199 contribute to the FMN site. Pyridoxal 5'-phosphate is bound at residue 205-207 (RLH). Arginine 209 is a binding site for FMN.

This sequence belongs to the pyridoxamine 5'-phosphate oxidase family. As to quaternary structure, homodimer. It depends on FMN as a cofactor.

The enzyme catalyses pyridoxamine 5'-phosphate + O2 + H2O = pyridoxal 5'-phosphate + H2O2 + NH4(+). It carries out the reaction pyridoxine 5'-phosphate + O2 = pyridoxal 5'-phosphate + H2O2. The protein operates within cofactor metabolism; pyridoxal 5'-phosphate salvage; pyridoxal 5'-phosphate from pyridoxamine 5'-phosphate: step 1/1. It functions in the pathway cofactor metabolism; pyridoxal 5'-phosphate salvage; pyridoxal 5'-phosphate from pyridoxine 5'-phosphate: step 1/1. Catalyzes the oxidation of either pyridoxine 5'-phosphate (PNP) or pyridoxamine 5'-phosphate (PMP) into pyridoxal 5'-phosphate (PLP). This Caenorhabditis elegans protein is Putative pyridoxamine 5'-phosphate oxidase.